The chain runs to 133 residues: Large ribosomal subunit protein uL16c (133 aa).

It belongs to the universal ribosomal protein uL16 family. As to quaternary structure, part of the 50S ribosomal subunit.

The protein resides in the plastid. It is found in the chloroplast. This chain is Large ribosomal subunit protein uL16c, found in Liriodendron tulipifera (Tuliptree).